A 418-amino-acid chain; its full sequence is ML-236A carboxylate methylbutanoyltransferase mlcH (418 aa).

Residue Arg78 participates in monacolin J binding. Ser81 serves as the catalytic Acyl-ester intermediate. The monacolin J site is built by Arg178, Tyr193, and Tyr262. Gly370 contributes to the 2-methylbutanoate binding site.

It belongs to the class-A beta-lactamase family.

It catalyses the reaction ML-236A carboxylate + (S)-2-methylbutanoyl-[2-methylbutanoate polyketide synthase] = mevinic carboxylate + holo-[2-methylbutanoate polyketide synthase]. It participates in polyketide biosynthesis. Its function is as follows. Compactin diketide synthase; part of the gene cluster that mediates the biosynthesis of compactin, also known as mevastatin or ML-236B, and which acts as a potent competitive inhibitor of HMG-CoA reductase. Compactin biosynthesis is performed in two stages. The first stage is catalyzed by the nonaketide synthase mlcA, which belongs to type I polyketide synthases and catalyzes the iterative nine-step formation of the polyketide. This PKS stage is completed by the action of dehydrogenase mlcG, which catalyzes the NADPH-dependent reduction of the unsaturated tetra-, penta- and heptaketide intermediates that arise during the mlcA-mediated biosynthesis of the nonaketide chain and leads to dihydro-ML-236C carboxylate. Covalently bound dihydro-ML-236C carboxylate is released from mlcA by the mlcF esterase. Conversion of dihydro-ML-236C carboxylate into ML-236A carboxylate is subsequently performed with the participation of molecular oxygen and P450 monoogygenase mlcC. Finally, mlcH performs the conversion of ML-236A carboxylate to ML-236B/compactin carboxylate through the addition of the side-chain diketide moiety produced by the diketide synthase mlcB. This Penicillium citrinum protein is ML-236A carboxylate methylbutanoyltransferase mlcH.